The primary structure comprises 444 residues: F-box protein At1g53790 (444 aa).

The region spanning 76 to 125 (VSCFRYIPIDLLMDIFSRVPAKSIARFRCVSKLWESILCRPDFKELFMTM) is the F-box domain.

In Arabidopsis thaliana (Mouse-ear cress), this protein is F-box protein At1g53790.